The chain runs to 267 residues: Tetrahydromethanopterin S-methyltransferase subunit C (267 aa).

8 helical membrane-spanning segments follow: residues 18–38 (LMAL…VNPV), 39–59 (IGPV…ADAI), 76–96 (YMSV…VFVV), 99–119 (IAVP…VAVL), 138–158 (ISGA…GSYT), 163–183 (LTSV…TMAI), 209–229 (FISM…WWLV), and 230–250 (SLIG…ASFE).

This sequence belongs to the MtrC family. As to quaternary structure, the complex is composed of 8 subunits; MtrA, MtrB, MtrC, MtrD, MtrE, MtrF, MtrG and MtrH.

The protein localises to the cell membrane. It catalyses the reaction 5-methyl-5,6,7,8-tetrahydromethanopterin + coenzyme M + 2 Na(+)(in) = 5,6,7,8-tetrahydromethanopterin + methyl-coenzyme M + 2 Na(+)(out). Its pathway is one-carbon metabolism; methanogenesis from CO(2); methyl-coenzyme M from 5,10-methylene-5,6,7,8-tetrahydromethanopterin: step 2/2. Part of a complex that catalyzes the formation of methyl-coenzyme M and tetrahydromethanopterin from coenzyme M and methyl-tetrahydromethanopterin. This is an energy-conserving, sodium-ion translocating step. The chain is Tetrahydromethanopterin S-methyltransferase subunit C from Methanothermobacter marburgensis (strain ATCC BAA-927 / DSM 2133 / JCM 14651 / NBRC 100331 / OCM 82 / Marburg) (Methanobacterium thermoautotrophicum).